The chain runs to 1401 residues: DNA-directed RNA polymerase subunit beta'' (1401 aa).

4 residues coordinate Zn(2+): cysteine 224, cysteine 294, cysteine 301, and cysteine 304.

It belongs to the RNA polymerase beta' chain family. RpoC2 subfamily. As to quaternary structure, in plastids the minimal PEP RNA polymerase catalytic core is composed of four subunits: alpha, beta, beta', and beta''. When a (nuclear-encoded) sigma factor is associated with the core the holoenzyme is formed, which can initiate transcription. Requires Zn(2+) as cofactor.

The protein resides in the plastid. It localises to the chloroplast. It carries out the reaction RNA(n) + a ribonucleoside 5'-triphosphate = RNA(n+1) + diphosphate. Functionally, DNA-dependent RNA polymerase catalyzes the transcription of DNA into RNA using the four ribonucleoside triphosphates as substrates. The sequence is that of DNA-directed RNA polymerase subunit beta'' from Nymphaea alba (White water-lily).